Here is a 115-residue protein sequence, read N- to C-terminus: Ribonuclease P protein component (115 aa).

Belongs to the RnpA family. As to quaternary structure, consists of a catalytic RNA component (M1 or rnpB) and a protein subunit.

The enzyme catalyses Endonucleolytic cleavage of RNA, removing 5'-extranucleotides from tRNA precursor.. Its function is as follows. RNaseP catalyzes the removal of the 5'-leader sequence from pre-tRNA to produce the mature 5'-terminus. It can also cleave other RNA substrates such as 4.5S RNA. The protein component plays an auxiliary but essential role in vivo by binding to the 5'-leader sequence and broadening the substrate specificity of the ribozyme. The protein is Ribonuclease P protein component of Phytoplasma australiense.